We begin with the raw amino-acid sequence, 398 residues long: Succinate--CoA ligase [ADP-forming] subunit beta (398 aa).

An ATP-grasp domain is found at 9–253 (KEILNSFGVR…VREENATEVE (245 aa)). ATP-binding positions include lysine 50, 57 to 59 (GRG), valine 106, and glutamate 116. The Mg(2+) site is built by asparagine 208 and aspartate 222. Substrate is bound by residues asparagine 273 and 330–332 (GIV).

This sequence belongs to the succinate/malate CoA ligase beta subunit family. Heterotetramer of two alpha and two beta subunits. Requires Mg(2+) as cofactor.

It carries out the reaction succinate + ATP + CoA = succinyl-CoA + ADP + phosphate. The enzyme catalyses GTP + succinate + CoA = succinyl-CoA + GDP + phosphate. It functions in the pathway carbohydrate metabolism; tricarboxylic acid cycle; succinate from succinyl-CoA (ligase route): step 1/1. Its function is as follows. Succinyl-CoA synthetase functions in the citric acid cycle (TCA), coupling the hydrolysis of succinyl-CoA to the synthesis of either ATP or GTP and thus represents the only step of substrate-level phosphorylation in the TCA. The beta subunit provides nucleotide specificity of the enzyme and binds the substrate succinate, while the binding sites for coenzyme A and phosphate are found in the alpha subunit. This Christiangramia forsetii (strain DSM 17595 / CGMCC 1.15422 / KT0803) (Gramella forsetii) protein is Succinate--CoA ligase [ADP-forming] subunit beta.